The following is a 981-amino-acid chain: Transcription factor TAC1 (981 aa).

The span at 1–29 (MDTSSSSGTHPSTFNNLTKQQELTGNDPN) shows a compositional bias: polar residues. A disordered region spans residues 1 to 33 (MDTSSSSGTHPSTFNNLTKQQELTGNDPNDTNR). Positions 40–68 (CDSCRRKKIKCNGSYPCGNCIQAKNTSNC) form a DNA-binding region, zn(2)-C6 fungal-type. Disordered regions lie at residues 74-106 (PVRK…TFSG), 165-199 (HSNS…TSHS), and 868-902 (LRDN…SNST). Over residues 165–177 (HSNSSMFNNNSLS) the composition is skewed to low complexity. Residues 868–880 (LRDNSTNHGQNNM) show a composition bias toward polar residues. Residues 881–902 (NPSPTITNNTYNSNINTGSNST) show a composition bias toward low complexity.

In terms of processing, phosphorylated. Phosphorylation leads to hyperactivation.

It localises to the nucleus. With respect to regulation, drugs such as farnesol and 1-dodecanol are able to hyperactivate TAC1 probably via phosphorylation by the Mediator complex. Functionally, transcriptional activator of drug-responsive genes including the ABC-type transporters CDR1 and CDR2, as well as HSP12 and RTA3. Binds the cis-acting regulatory drug-responsive elements (DREs) with the consensus sequence 5'-CGGAWATCGGATATTTTTTT-3' in the promoters of target genes. The sequence is that of Transcription factor TAC1 from Candida albicans (strain SC5314 / ATCC MYA-2876) (Yeast).